The sequence spans 413 residues: Multifunctional CCA protein (413 aa).

Residues Gly-8 and Arg-11 each coordinate ATP. 2 residues coordinate CTP: Gly-8 and Arg-11. Positions 21 and 23 each coordinate Mg(2+). ATP-binding residues include Arg-91, Arg-141, and Arg-144. Residues Arg-91, Arg-141, and Arg-144 each coordinate CTP. The region spanning 230–331 (TGAHLLLVLD…VRLLERCDAL (102 aa)) is the HD domain.

The protein belongs to the tRNA nucleotidyltransferase/poly(A) polymerase family. Bacterial CCA-adding enzyme type 1 subfamily. As to quaternary structure, monomer. Can also form homodimers and oligomers. It depends on Mg(2+) as a cofactor. Ni(2+) serves as cofactor.

It carries out the reaction a tRNA precursor + 2 CTP + ATP = a tRNA with a 3' CCA end + 3 diphosphate. It catalyses the reaction a tRNA with a 3' CCA end + 2 CTP + ATP = a tRNA with a 3' CCACCA end + 3 diphosphate. Its function is as follows. Catalyzes the addition and repair of the essential 3'-terminal CCA sequence in tRNAs without using a nucleic acid template. Adds these three nucleotides in the order of C, C, and A to the tRNA nucleotide-73, using CTP and ATP as substrates and producing inorganic pyrophosphate. tRNA 3'-terminal CCA addition is required both for tRNA processing and repair. Also involved in tRNA surveillance by mediating tandem CCA addition to generate a CCACCA at the 3' terminus of unstable tRNAs. While stable tRNAs receive only 3'-terminal CCA, unstable tRNAs are marked with CCACCA and rapidly degraded. The chain is Multifunctional CCA protein from Verminephrobacter eiseniae (strain EF01-2).